A 271-amino-acid polypeptide reads, in one-letter code: Co-chaperone protein DjlA (271 aa).

The Periplasmic portion of the chain corresponds to 1-6 (MQYWGK). A helical transmembrane segment spans residues 7–31 (IIGVAVALIMGGGFWGVVLGLLIGH). The Cytoplasmic segment spans residues 32 to 271 (MFDKARSRKM…ELIKQQKGFK (240 aa)). One can recognise a J domain in the interval 205–271 (DACNVLGVKP…ELIKQQKGFK (67 aa)).

Homodimer.

The protein localises to the cell inner membrane. In terms of biological role, regulatory DnaK co-chaperone. Direct interaction between DnaK and DjlA is needed for the induction of the wcaABCDE operon, involved in the synthesis of a colanic acid polysaccharide capsule, possibly through activation of the RcsB/RcsC phosphotransfer signaling pathway. The colanic acid capsule may help the bacterium survive conditions outside the host. This chain is Co-chaperone protein DjlA, found in Escherichia coli O6:H1 (strain CFT073 / ATCC 700928 / UPEC).